The sequence spans 149 residues: Lymphocyte antigen 6 complex locus protein G5c (149 aa).

Positions 1 to 41 (MLFMAGPAASWSLRPLGLHGVPQALCAVLLTVLVMKTLVLG) are cleaved as a signal peptide. Residues 59-149 (LNCYRCLLET…NPDNRKNSMH (91 aa)) form the UPAR/Ly6 domain. 5 disulfides stabilise this stretch: cysteine 61/cysteine 88, cysteine 64/cysteine 73, cysteine 80/cysteine 106, cysteine 115/cysteine 132, and cysteine 133/cysteine 138. Asparagine 95 carries an N-linked (GlcNAc...) asparagine glycan.

As to quaternary structure, forms oligomers. N-glycosylated. As to expression, detected in adult brain.

Its subcellular location is the secreted. Its function is as follows. May have a role in hematopoietic cell differentiation. The polypeptide is Lymphocyte antigen 6 complex locus protein G5c (Ly6g5c) (Mus musculus (Mouse)).